Consider the following 202-residue polypeptide: Large ribosomal subunit protein uL4 (202 aa).

The disordered stretch occupies residues 47–67 (KTKAEVSGGGVKPWKQKGTGR).

It belongs to the universal ribosomal protein uL4 family. As to quaternary structure, part of the 50S ribosomal subunit.

In terms of biological role, one of the primary rRNA binding proteins, this protein initially binds near the 5'-end of the 23S rRNA. It is important during the early stages of 50S assembly. It makes multiple contacts with different domains of the 23S rRNA in the assembled 50S subunit and ribosome. Functionally, forms part of the polypeptide exit tunnel. In Dichelobacter nodosus (strain VCS1703A), this protein is Large ribosomal subunit protein uL4.